Reading from the N-terminus, the 311-residue chain is tRNA-cytidine(32) 2-sulfurtransferase (311 aa).

The PP-loop motif signature appears at 47 to 52 (SGGKDS). Positions 122, 125, and 213 each coordinate [4Fe-4S] cluster.

The protein belongs to the TtcA family. In terms of assembly, homodimer. Mg(2+) is required as a cofactor. [4Fe-4S] cluster serves as cofactor.

Its subcellular location is the cytoplasm. It catalyses the reaction cytidine(32) in tRNA + S-sulfanyl-L-cysteinyl-[cysteine desulfurase] + AH2 + ATP = 2-thiocytidine(32) in tRNA + L-cysteinyl-[cysteine desulfurase] + A + AMP + diphosphate + H(+). It participates in tRNA modification. In terms of biological role, catalyzes the ATP-dependent 2-thiolation of cytidine in position 32 of tRNA, to form 2-thiocytidine (s(2)C32). The sulfur atoms are provided by the cysteine/cysteine desulfurase (IscS) system. The sequence is that of tRNA-cytidine(32) 2-sulfurtransferase from Escherichia coli O45:K1 (strain S88 / ExPEC).